A 71-amino-acid polypeptide reads, in one-letter code: Translation initiation factor IF-1 (71 aa).

One can recognise an S1-like domain in the interval 1 to 71 (MSKDDLIQFT…LTKGRVIHRH (71 aa)).

It belongs to the IF-1 family. Component of the 30S ribosomal translation pre-initiation complex which assembles on the 30S ribosome in the order IF-2 and IF-3, IF-1 and N-formylmethionyl-tRNA(fMet); mRNA recruitment can occur at any time during PIC assembly.

The protein resides in the cytoplasm. One of the essential components for the initiation of protein synthesis. Stabilizes the binding of IF-2 and IF-3 on the 30S subunit to which N-formylmethionyl-tRNA(fMet) subsequently binds. Helps modulate mRNA selection, yielding the 30S pre-initiation complex (PIC). Upon addition of the 50S ribosomal subunit IF-1, IF-2 and IF-3 are released leaving the mature 70S translation initiation complex. This chain is Translation initiation factor IF-1, found in Rickettsia canadensis (strain McKiel).